Consider the following 263-residue polypeptide: Non-functional protein STAY-GREEN, chloroplastic (263 aa).

The transit peptide at 1 to 54 directs the protein to the chloroplast; sequence MDTLTSAPLLTSKFKPSFSPQQKPCFPHRRRFENGKKKQSIVPVARLFGPAIFE.

It belongs to the staygreen family.

It is found in the plastid. The protein localises to the chloroplast. In terms of biological role, non-functional protein probably interfering with the disassembling mechanism of the intact light-harvesting complex of photosystem II (LHCII) in the thylakoid membranes. Responsible for a stay-green phenotype. This Pisum sativum (Garden pea) protein is Non-functional protein STAY-GREEN, chloroplastic (SGR).